The following is a 353-amino-acid chain: Rhodopsin (353 aa).

The Extracellular portion of the chain corresponds to 1–36 (MNGTEGPYFYVPMVNTSGIVRSPYEYPQYYLVNPAA). 2 N-linked (GlcNAc...) asparagine glycosylation sites follow: N2 and N15. Residues 37–61 (YAALGAYMFLLILVGFPINFLTLYV) traverse the membrane as a helical segment. Topologically, residues 62 to 73 (TIEHKKLRTPLN) are cytoplasmic. The chain crosses the membrane as a helical span at residues 74 to 96 (YILLNLAVADLFMVFGGFTTTMY). The Extracellular portion of the chain corresponds to 97 to 110 (TSMHGYFVLGRLGC). An intrachain disulfide couples C110 to C187. Residues 111–133 (NIEGFFATLGGEIALWSLVVLAI) form a helical membrane-spanning segment. A 'Ionic lock' involved in activated form stabilization motif is present at residues 134–136 (ERW). Over 134–152 (ERWVVVCKPISNFRFGENH) the chain is Cytoplasmic. A helical membrane pass occupies residues 153 to 173 (AIMGLAFTWLMALACAAPPLV). The Extracellular portion of the chain corresponds to 174–202 (GWSRYIPEGMQCSCGIDYYTRAEGFNNES). Residue N200 is glycosylated (N-linked (GlcNAc...) asparagine). The chain crosses the membrane as a helical span at residues 203–224 (FVIYMFICHFSIPLLVVFFCYG). The Cytoplasmic portion of the chain corresponds to 225–252 (RLLCAVKEAAAAQQESETTQRAEREVTR). The chain crosses the membrane as a helical span at residues 253-274 (MVIMMVIAFLVCWLPYASVAWW). At 275–286 (IFTHQGSDFGPV) the chain is on the extracellular side. Residues 287–308 (FMTIPAFFAKSSSIYNPMIYIC) form a helical membrane-spanning segment. Residue K296 is modified to N6-(retinylidene)lysine. The Cytoplasmic portion of the chain corresponds to 309–353 (LNKQFRHCMITTLCCGKNPFEEEEGASTASKTEASSVSSSSVSPA). 2 S-palmitoyl cysteine lipidation sites follow: C322 and C323. Residues 331 to 353 (EEGASTASKTEASSVSSSSVSPA) form a disordered region. The segment covering 334 to 353 (ASTASKTEASSVSSSSVSPA) has biased composition (low complexity).

The protein belongs to the G-protein coupled receptor 1 family. Opsin subfamily. Phosphorylated on some or all of the serine and threonine residues present in the C-terminal region. In terms of processing, contains one covalently linked retinal chromophore.

Its subcellular location is the membrane. It is found in the cell projection. The protein resides in the cilium. It localises to the photoreceptor outer segment. In terms of biological role, photoreceptor required for image-forming vision at low light intensity. While most salt water fish species use retinal as chromophore, most freshwater fish use 3-dehydroretinal, or a mixture of retinal and 3-dehydroretinal. Light-induced isomerization of 11-cis to all-trans retinal triggers a conformational change that activates signaling via G-proteins. Subsequent receptor phosphorylation mediates displacement of the bound G-protein alpha subunit by arrestin and terminates signaling. The protein is Rhodopsin (rho) of Diplodus vulgaris (Common two-banded seabream).